A 96-amino-acid chain; its full sequence is Colicin-K immunity protein (96 aa).

A helical membrane pass occupies residues alanine 73–leucine 93.

The protein resides in the cell membrane. This protein is able to protect a cell, which harbors the plasmid ColK encoding colicin K, against colicin K. In Escherichia coli, this protein is Colicin-K immunity protein (cki).